The following is a 100-amino-acid chain: Urease subunit gamma (100 aa).

This sequence belongs to the urease gamma subunit family. Heterotrimer of UreA (gamma), UreB (beta) and UreC (alpha) subunits. Three heterotrimers associate to form the active enzyme.

The protein localises to the cytoplasm. The enzyme catalyses urea + 2 H2O + H(+) = hydrogencarbonate + 2 NH4(+). The protein operates within nitrogen metabolism; urea degradation; CO(2) and NH(3) from urea (urease route): step 1/1. In Bacillus sp. (strain TB-90), this protein is Urease subunit gamma.